The following is a 154-amino-acid chain: D-aminoacyl-tRNA deacylase (154 aa).

Residues 142–143 (GP) carry the Gly-cisPro motif, important for rejection of L-amino acids motif.

It belongs to the DTD family. In terms of assembly, homodimer.

It is found in the cytoplasm. It carries out the reaction glycyl-tRNA(Ala) + H2O = tRNA(Ala) + glycine + H(+). It catalyses the reaction a D-aminoacyl-tRNA + H2O = a tRNA + a D-alpha-amino acid + H(+). Its function is as follows. An aminoacyl-tRNA editing enzyme that deacylates mischarged D-aminoacyl-tRNAs. Also deacylates mischarged glycyl-tRNA(Ala), protecting cells against glycine mischarging by AlaRS. Acts via tRNA-based rather than protein-based catalysis; rejects L-amino acids rather than detecting D-amino acids in the active site. By recycling D-aminoacyl-tRNA to D-amino acids and free tRNA molecules, this enzyme counteracts the toxicity associated with the formation of D-aminoacyl-tRNA entities in vivo and helps enforce protein L-homochirality. The polypeptide is D-aminoacyl-tRNA deacylase (DTD1) (Yarrowia lipolytica (strain CLIB 122 / E 150) (Yeast)).